The sequence spans 348 residues: Putative zinc metalloprotease HP_0258 (348 aa).

A Zn(2+)-binding site is contributed by His16. Glu17 is an active-site residue. Zn(2+) is bound at residue His20. Transmembrane regions (helical) follow at residues Cys43–Val63, Trp93–Leu113, Leu247–Leu267, Met275–Ile295, and Leu324–Leu344. The PDZ domain occupies Ala106–Asn175.

This sequence belongs to the peptidase M50B family. It depends on Zn(2+) as a cofactor.

The protein localises to the cell inner membrane. This chain is Putative zinc metalloprotease HP_0258, found in Helicobacter pylori (strain ATCC 700392 / 26695) (Campylobacter pylori).